The following is a 99-amino-acid chain: Defensin-like protein 2 (99 aa).

Residues 1–30 (MAMAKKSVSSFTLIFILVLVIFEVPEIKAQ) form the signal peptide. 4 disulfides stabilise this stretch: C34–C86, C47–C71, C56–C81, and C60–C83. A propeptide spanning residues 94–99 (ILRGGI) is cleaved from the precursor.

It belongs to the DEFL family. Protease inhibitor I18 (RTI/MTI-2) subfamily.

Its subcellular location is the secreted. Inhibits bovine beta-trypsin and alpha-chymotrypsin on a 1:1 molar basis. The polypeptide is Defensin-like protein 2 (Sinapis alba (White mustard)).